Reading from the N-terminus, the 238-residue chain is 3,4-dihydroxy-2-butanone 4-phosphate synthase (238 aa).

D-ribulose 5-phosphate-binding positions include 26–27 (RE), Asp31, 166–170 (RVGQT), and Glu190. Glu27 lines the Mg(2+) pocket.

Belongs to the DHBP synthase family. In terms of assembly, homodimer. It depends on Mg(2+) as a cofactor. The cofactor is Mn(2+).

It catalyses the reaction D-ribulose 5-phosphate = (2S)-2-hydroxy-3-oxobutyl phosphate + formate + H(+). Its pathway is cofactor biosynthesis; riboflavin biosynthesis; 2-hydroxy-3-oxobutyl phosphate from D-ribulose 5-phosphate: step 1/1. Catalyzes the conversion of D-ribulose 5-phosphate to formate and 3,4-dihydroxy-2-butanone 4-phosphate. The sequence is that of 3,4-dihydroxy-2-butanone 4-phosphate synthase from Archaeoglobus fulgidus (strain ATCC 49558 / DSM 4304 / JCM 9628 / NBRC 100126 / VC-16).